The following is a 1400-amino-acid chain: Macrophage-stimulating protein receptor (1400 aa).

The first 24 residues, 1–24 (MELLPPLPQSFLLLLLLPAKPAAG), serve as a signal peptide directing secretion. At 25 to 957 (EDWQCPRTPY…PGPDGVPQST (933 aa)) the chain is on the extracellular side. A Sema domain is found at 31 to 522 (RTPYAASRDF…SGDQVFQVPI (492 aa)). A glycan (N-linked (GlcNAc...) asparagine) is linked at Asn-66. 7 disulfide bridges follow: Cys-101/Cys-104, Cys-107/Cys-162, Cys-135/Cys-143, Cys-174/Cys-177, Cys-300/Cys-367, Cys-385/Cys-407, and Cys-386/Cys-422. 3 N-linked (GlcNAc...) asparagine glycosylation sites follow: Asn-419, Asn-458, and Asn-488. 4 disulfide bridges follow: Cys-527/Cys-545, Cys-533/Cys-567, Cys-536/Cys-552, and Cys-548/Cys-558. IPT/TIG domains are found at residues 569 to 671 (PKLT…FRVD), 684 to 767 (PVLI…FQYR), and 770 to 860 (PVVL…FRFL). Residues Asn-654, Asn-720, Asn-841, and Asn-897 are each glycosylated (N-linked (GlcNAc...) asparagine). Residues 958–978 (LLGILLPLLLLVAALATALVF) traverse the membrane as a helical segment. Topologically, residues 979–1400 (SYWWRRKQLV…RPLSEPPRPT (422 aa)) are cytoplasmic. The region spanning 1082-1345 (THSDRVIGKG…VLVGEVEQIV (264 aa)) is the Protein kinase domain. Residues 1088–1096 (IGKGHFGVV), Lys-1114, and 1161–1164 (LPYM) contribute to the ATP site. Asp-1208 serves as the catalytic Proton acceptor. Arg-1212 serves as a coordination point for ATP. Tyr-1238, Tyr-1239, Tyr-1353, and Tyr-1360 each carry phosphotyrosine; by autocatalysis. Positions 1367–1400 (TSHEMNVRPEQPQFSPMPGNVRRPRPLSEPPRPT) are disordered.

Belongs to the protein kinase superfamily. Tyr protein kinase family. Heterodimer of an alpha chain and a beta chain which are disulfide linked. Binds PLXNB1. Associates with and is negatively regulated by HYAL2. Interacts when phosphorylated with downstream effectors including PIK3R1, PCLG1, GRB2 and GAB1. Interacts with integrin beta1/ITGB1 in a ligand-independent fashion. Post-translationally, proteolytic processing yields the two subunits. In terms of processing, autophosphorylated in response to ligand binding on Tyr-1238 and Tyr-1239 in the kinase domain leading to further phosphorylation of Tyr-1353 and Tyr-1360 in the C-terminal multifunctional docking site. Ubiquitinated. Ubiquitination by CBL regulates the receptor stability and activity through proteasomal degradation. Post-translationally, O-mannosylation of IPT/TIG domains on Thr or Ser residues by TMEM260 is required for protein maturation. O-mannosylated residues are composed of single mannose glycans that are not elongated or modified. As to expression, expressed in colon, skin, lung and bone marrow.

It is found in the membrane. The catalysed reaction is L-tyrosyl-[protein] + ATP = O-phospho-L-tyrosyl-[protein] + ADP + H(+). With respect to regulation, in its inactive state, the C-terminal tail interacts with the catalytic domain and inhibits the kinase activity. Upon ligand binding, the C-terminal tail is displaced and becomes phosphorylated, thus increasing the kinase activity. Receptor tyrosine kinase that transduces signals from the extracellular matrix into the cytoplasm by binding to MST1 ligand. Regulates many physiological processes including cell survival, migration and differentiation. Ligand binding at the cell surface induces autophosphorylation of RON on its intracellular domain that provides docking sites for downstream signaling molecules. Following activation by ligand, interacts with the PI3-kinase subunit PIK3R1, PLCG1 or the adapter GAB1. Recruitment of these downstream effectors by RON leads to the activation of several signaling cascades including the RAS-ERK, PI3 kinase-AKT, or PLCgamma-PKC. RON signaling activates the wound healing response by promoting epithelial cell migration, proliferation as well as survival at the wound site. Also plays a role in the innate immune response by regulating the migration and phagocytic activity of macrophages. Alternatively, RON can also promote signals such as cell migration and proliferation in response to growth factors other than MST1 ligand. The polypeptide is Macrophage-stimulating protein receptor (MST1R) (Homo sapiens (Human)).